Here is a 314-residue protein sequence, read N- to C-terminus: MENETFGTELPDTWVGRIDGDNPEHALWYTTVSPLPEPDEVEEGVVTLGFASDEGNLRNHGTAGAALGPDAIRGVLGLVAVHDARPRYDAGTIRVGGDLERGHDELSDAVETIARAGHLPIVLGGGHEAGFGSHRGIYRARGSSPAIINLDAHLDLRAAERPTNGTPFRQVRELVGEEFRYSVLGVSVPNNTDFLFNAAREFGTEVTTDDEINAMSPQEAADHALALVRDAEHIHLTVDIDVLSEALAPGTGSPAAVGVELGRIRAICTGLAATGRLTLVDVVEVNPRLDHNNQTARVAARLIHEIAEAHLKAT.

Residues His-127, Asp-151, His-153, Asp-155, Asp-239, and Asp-241 each coordinate Mn(2+).

Belongs to the arginase family. It depends on Mn(2+) as a cofactor.

It catalyses the reaction N-formimidoyl-L-glutamate + H2O = formamide + L-glutamate. It participates in amino-acid degradation; L-histidine degradation into L-glutamate; L-glutamate from N-formimidoyl-L-glutamate (hydrolase route): step 1/1. Functionally, catalyzes the conversion of N-formimidoyl-L-glutamate to L-glutamate and formamide. The sequence is that of Formimidoylglutamase from Corynebacterium efficiens (strain DSM 44549 / YS-314 / AJ 12310 / JCM 11189 / NBRC 100395).